Reading from the N-terminus, the 1292-residue chain is Zinc finger CCCH domain-containing protein 44 (1292 aa).

Residues 1–10 (MENQQKQLQQ) are compositionally biased toward polar residues. Disordered stretches follow at residues 1–24 (MENQ…REES) and 72–107 (IDEA…KKED). The segment at 110-176 (EDVCFICFDG…SYMCYTCTFS (67 aa)) adopts a PHD-type zinc-finger fold. Disordered stretches follow at residues 256-313 (PWKE…LKKA) and 401-426 (KGAK…VHDP). The SWIB/MDM2 domain maps to 313-396 (APGDTSWATK…LKLLESHVLI (84 aa)). The span at 404-414 (KTTNGETTHAV) shows a compositional bias: polar residues. One can recognise a Plus3 domain in the interval 453–586 (AIDVHNINLI…TAATLQAMRI (134 aa)). 4 disordered regions span residues 624 to 731 (PEVH…TQGP), 777 to 832 (TTLP…SNDP), 876 to 915 (DVRE…INGS), and 1170 to 1245 (TTVE…HNNR). The span at 661-675 (QNKGVNLNNVGNNVQ) shows a compositional bias: low complexity. Residues 689-698 (VHADKDDCSK) are compositionally biased toward basic and acidic residues. Residues 699–708 (VHNNSSNIQE) are compositionally biased toward polar residues. Positions 716–770 (SEIWHYRDPTGKTQGPFSMVQLRRWKSSGHFPPYLRIWRAHENQDESVLLTDALA) constitute a GYF domain. The segment covering 813–829 (VNTSATSSSSSTVTAHS) has biased composition (low complexity). Composition is skewed to polar residues over residues 882–899 (GTDQ…NTTK) and 906–915 (NGGSVSINGS). Low complexity-rich tracts occupy residues 1188-1206 (SSEP…SARG) and 1231-1244 (NNGH…SHNN). A C3H1-type zinc finger spans residues 1267-1292 (PKGLKICKFYESGYCKRGASCSFWHP).

The chain is Zinc finger CCCH domain-containing protein 44 from Arabidopsis thaliana (Mouse-ear cress).